The sequence spans 97 residues: Aspartyl/glutamyl-tRNA(Asn/Gln) amidotransferase subunit C (97 aa).

It belongs to the GatC family. Heterotrimer of A, B and C subunits.

The enzyme catalyses L-glutamyl-tRNA(Gln) + L-glutamine + ATP + H2O = L-glutaminyl-tRNA(Gln) + L-glutamate + ADP + phosphate + H(+). It carries out the reaction L-aspartyl-tRNA(Asn) + L-glutamine + ATP + H2O = L-asparaginyl-tRNA(Asn) + L-glutamate + ADP + phosphate + 2 H(+). In terms of biological role, allows the formation of correctly charged Asn-tRNA(Asn) or Gln-tRNA(Gln) through the transamidation of misacylated Asp-tRNA(Asn) or Glu-tRNA(Gln) in organisms which lack either or both of asparaginyl-tRNA or glutaminyl-tRNA synthetases. The reaction takes place in the presence of glutamine and ATP through an activated phospho-Asp-tRNA(Asn) or phospho-Glu-tRNA(Gln). The sequence is that of Aspartyl/glutamyl-tRNA(Asn/Gln) amidotransferase subunit C from Cyanothece sp. (strain PCC 7425 / ATCC 29141).